A 431-amino-acid polypeptide reads, in one-letter code: MLVLKTTDQEFSTRFQSLVSDRREATVDVSGTVRDILAHVKAHGDAAVQEYTSRFDHYSPHSHHLSAAFIAEQAAKCSAEVKAAIELAAERISSFHQKQLPQDIGYTDTVGVKLGLNWVALSQVGIYVPGGRASYPSSVLMNALPAKIAGVERIVMTVPMPHGEINPAVLAAAQVAGVTEIYSIGGAQAVGALAYGTETITPVDKIVGPGNAYVAEAKRQVFGTVGIDSIAGPSEILVVADRQNNPEWIAWDLLSQAEHDPSAQSILITDSESFAQQVIGAVEQILTTLPTTKVASSSWQNHGAVIIVRDLAESIPLLNQLAPEHVELCVDNPQLLASQIKCAGSLFLGRYTPEAIGDYLGGPNHVLPTSRSARFASGLSVYDFLKRITYLECNQAALQAIGQSAVTLAETEGLPAHAGSVAVRLQGLNDM.

NAD(+)-binding residues include tyrosine 127, glutamine 188, and asparagine 211. 3 residues coordinate substrate: serine 234, glutamine 256, and histidine 259. 2 residues coordinate Zn(2+): glutamine 256 and histidine 259. Catalysis depends on proton acceptor residues glutamate 324 and histidine 325. Residues histidine 325, aspartate 358, glutamate 412, and histidine 417 each contribute to the substrate site. A Zn(2+)-binding site is contributed by aspartate 358. A Zn(2+)-binding site is contributed by histidine 417.

It belongs to the histidinol dehydrogenase family. It depends on Zn(2+) as a cofactor.

The enzyme catalyses L-histidinol + 2 NAD(+) + H2O = L-histidine + 2 NADH + 3 H(+). The protein operates within amino-acid biosynthesis; L-histidine biosynthesis; L-histidine from 5-phospho-alpha-D-ribose 1-diphosphate: step 9/9. Its function is as follows. Catalyzes the sequential NAD-dependent oxidations of L-histidinol to L-histidinaldehyde and then to L-histidine. The protein is Histidinol dehydrogenase 1 of Trichormus variabilis (strain ATCC 29413 / PCC 7937) (Anabaena variabilis).